We begin with the raw amino-acid sequence, 86 residues long: U-actitoxin-Avd10a (86 aa).

A signal peptide spans 1–20; that stretch reads MSRIAILLFVAFLLVAGISA. A propeptide spanning residues 21 to 42 is cleaved from the precursor; that stretch reads KSTAHFKKNVLADLFKERRFNA. The ShKT domain maps to 51 to 86; the sequence is CVNIDVDSFCDGMAERGACNIIPQMATNCAKACNSC. 3 disulfides stabilise this stretch: C51–C86, C60–C79, and C69–C83.

It belongs to the sea anemone type 1 potassium channel toxin family. Type 1b subfamily.

It localises to the secreted. It is found in the nematocyst. In terms of biological role, inhibits voltage-gated potassium channels (Kv1/KCNA). The polypeptide is U-actitoxin-Avd10a (Anemonia viridis (Snakelocks anemone)).